A 28-amino-acid chain; its full sequence is Seed allergenic protein 1 (28 aa).

Residues V1–M28 form a disordered region.

The sequence is that of Seed allergenic protein 1 from Prunus dulcis (Almond).